We begin with the raw amino-acid sequence, 570 residues long: Proline--tRNA ligase (570 aa).

It belongs to the class-II aminoacyl-tRNA synthetase family. ProS type 1 subfamily. As to quaternary structure, homodimer.

The protein resides in the cytoplasm. It catalyses the reaction tRNA(Pro) + L-proline + ATP = L-prolyl-tRNA(Pro) + AMP + diphosphate. Catalyzes the attachment of proline to tRNA(Pro) in a two-step reaction: proline is first activated by ATP to form Pro-AMP and then transferred to the acceptor end of tRNA(Pro). As ProRS can inadvertently accommodate and process non-cognate amino acids such as alanine and cysteine, to avoid such errors it has two additional distinct editing activities against alanine. One activity is designated as 'pretransfer' editing and involves the tRNA(Pro)-independent hydrolysis of activated Ala-AMP. The other activity is designated 'posttransfer' editing and involves deacylation of mischarged Ala-tRNA(Pro). The misacylated Cys-tRNA(Pro) is not edited by ProRS. The protein is Proline--tRNA ligase of Shewanella sp. (strain MR-4).